An 847-amino-acid polypeptide reads, in one-letter code: B-cell receptor CD22 (847 aa).

The first 19 residues, 1-19 (MHLLGPWLLLLVLEYLAFS), serve as a signal peptide directing secretion. An Ig-like V-type domain is found at 20 to 138 (DSSKWAFEHP…MERIHLNVSE (119 aa)). Over 20-687 (DSSKWAFEHP…YYSPETIGRR (668 aa)) the chain is Extracellular. 3 N-linked (GlcNAc...) asparagine glycosylation sites follow: N67, N101, and N112. Residue R120 coordinates N-acetylneuraminate. N-linked (GlcNAc...) asparagine glycans are attached at residues N135, N164, and N231. 6 Ig-like C2-type domains span residues 143 to 235 (PHIQ…DTVQ), 242 to 326 (PKLE…VFLQ), 331 to 416 (PEPS…LDVQ), 419 to 500 (PKKV…VALN), 505 to 582 (PRDV…QTAS), and 593 to 676 (PRRL…STLT). Cysteines 161 and 219 form a disulfide. Cystine bridges form between C265/C309 and C353/C396. Residues N363, N428, N445, N448, and N479 are each glycosylated (N-linked (GlcNAc...) asparagine). 2 cysteine pairs are disulfide-bonded: C442-C484 and C529-C571. N-linked (GlcNAc...) asparagine glycosylation is found at N574 and N634. The cysteines at positions 616 and 659 are disulfide-linked. Residues 688 to 708 (VAVGFGSCLAILILAICGLKL) traverse the membrane as a helical segment. The Cytoplasmic portion of the chain corresponds to 709 to 847 (QRRWKRTQSQ…ENVDYVILKH (139 aa)). Residues S725, S726, and S729 each carry the phosphoserine modification. Short sequence motifs (ITIM motif) lie at residues 760–765 (ISYTTL) and 794–799 (VTYSVL). Y762 carries the post-translational modification Phosphotyrosine. Phosphotyrosine is present on residues Y807, Y822, and Y842. 2 consecutive short sequence motifs (ITIM motif) follow at residues 820–825 (IHYSEL) and 840–845 (VDYVIL).

It belongs to the immunoglobulin superfamily. SIGLEC (sialic acid binding Ig-like lectin) family. As to quaternary structure, predominantly monomer of isoform CD22-beta. Also found as heterodimer of isoform CD22-beta and a shorter isoform. Interacts with PTPN6/SHP-1, LYN, SYK, PIK3R1/PIK3R2 and PLCG1 upon phosphorylation. Interacts with GRB2, INPP5D and SHC1 upon phosphorylation. May form a complex with INPP5D/SHIP, GRB2 and SHC1. Post-translationally, phosphorylation of Tyr-762, Tyr-807 and Tyr-822 are involved in binding to SYK, GRB2 and SYK, respectively. Phosphorylation of Tyr-842 is involved in binding to SYK, PLCG2 and PIK3R1/PIK3R2. Phosphorylated on tyrosine residues by LYN.

It localises to the cell membrane. In terms of biological role, most highly expressed siglec (sialic acid-binding immunoglobulin-like lectin) on B-cells that plays a role in various aspects of B-cell biology including differentiation, antigen presentation, and trafficking to bone marrow. Binds to alpha 2,6-linked sialic acid residues of surface molecules such as CD22 itself, CD45 and IgM in a cis configuration. Can also bind to ligands on other cells as an adhesion molecule in a trans configuration. Acts as an inhibitory coreceptor on the surface of B-cells and inhibits B-cell receptor induced signaling, characterized by inhibition of the calcium mobilization and cellular activation. Mechanistically, the immunoreceptor tyrosine-based inhibitory motif domain is phosphorylated by the Src kinase LYN, which in turn leads to the recruitment of the protein tyrosine phosphatase 1/PTPN6, leading to the negative regulation of BCR signaling. If this negative signaling from is of sufficient strength, apoptosis of the B-cell can be induced. The chain is B-cell receptor CD22 from Pan paniscus (Pygmy chimpanzee).